We begin with the raw amino-acid sequence, 380 residues long: Cytochrome b (380 aa).

A run of 4 helical transmembrane segments spans residues 33 to 53 (FGSL…FLAM), 77 to 98 (WLIR…YLHI), 113 to 133 (WNVG…GYVL), and 178 to 198 (FFAF…LHLL). Heme b contacts are provided by H83 and H97. Heme b contacts are provided by H182 and H196. Residue H201 participates in a ubiquinone binding. A run of 4 helical transmembrane segments spans residues 226–246 (YKDL…ALFS), 288–308 (LGGV…PFLH), 320–340 (ASQF…WIGG), and 347–367 (FIII…VLFP).

It belongs to the cytochrome b family. As to quaternary structure, the cytochrome bc1 complex contains 3 respiratory subunits (MT-CYB, CYC1 and UQCRFS1), 2 core proteins (UQCRC1 and UQCRC2) and probably 6 low-molecular weight proteins. Heme b is required as a cofactor.

The protein resides in the mitochondrion inner membrane. Component of the ubiquinol-cytochrome c reductase complex (complex III or cytochrome b-c1 complex) that is part of the mitochondrial respiratory chain. The b-c1 complex mediates electron transfer from ubiquinol to cytochrome c. Contributes to the generation of a proton gradient across the mitochondrial membrane that is then used for ATP synthesis. This Scomber scombrus (Atlantic mackerel) protein is Cytochrome b (mt-cyb).